A 164-amino-acid chain; its full sequence is Phosphopantetheine adenylyltransferase (164 aa).

Ser-9 is a substrate binding site. ATP-binding positions include 9-10 (SF) and His-17. The substrate site is built by Lys-41, Leu-73, and Lys-87. Residues 88–90 (GLR), Glu-98, and 123–129 (YSYLSSS) contribute to the ATP site.

Belongs to the bacterial CoaD family. As to quaternary structure, homohexamer. Mg(2+) is required as a cofactor.

The protein resides in the cytoplasm. The catalysed reaction is (R)-4'-phosphopantetheine + ATP + H(+) = 3'-dephospho-CoA + diphosphate. Its pathway is cofactor biosynthesis; coenzyme A biosynthesis; CoA from (R)-pantothenate: step 4/5. Reversibly transfers an adenylyl group from ATP to 4'-phosphopantetheine, yielding dephospho-CoA (dPCoA) and pyrophosphate. The polypeptide is Phosphopantetheine adenylyltransferase (Clostridium botulinum (strain Okra / Type B1)).